A 75-amino-acid chain; its full sequence is UPF0270 protein PSPPH_1506 (75 aa).

Belongs to the UPF0270 family.

This chain is UPF0270 protein PSPPH_1506, found in Pseudomonas savastanoi pv. phaseolicola (strain 1448A / Race 6) (Pseudomonas syringae pv. phaseolicola (strain 1448A / Race 6)).